The following is a 486-amino-acid chain: Photosystem II CP43 reaction center protein (486 aa).

Positions 1-28 (MKVFVHGWQHKISHTRILYSLRRFYHVE) are excised as a propeptide. Transmembrane regions (helical) follow at residues 82-106 (LFEV…PHLA), 147-168 (LIGP…RDKN), 191-213 (KALF…RLIN), 268-288 (KPFA…LSYS), and 304-325 (WYNN…ASQA). E380 contributes to the [CaMn4O5] cluster binding site. Residues 460 to 484 (RARAAAAGFEKGINRENEAVLSMRP) traverse the membrane as a helical segment.

This sequence belongs to the PsbB/PsbC family. PsbC subfamily. As to quaternary structure, PSII is composed of 1 copy each of membrane proteins PsbA, PsbB, PsbC, PsbD, PsbE, PsbF, PsbH, PsbI, PsbJ, PsbK, PsbL, PsbM, PsbT, PsbX, PsbY, PsbZ, Psb30/Ycf12, at least 3 peripheral proteins of the oxygen-evolving complex and a large number of cofactors. It forms dimeric complexes. Requires Binds multiple chlorophylls and provides some of the ligands for the Ca-4Mn-5O cluster of the oxygen-evolving complex. It may also provide a ligand for a Cl- that is required for oxygen evolution. PSII binds additional chlorophylls, carotenoids and specific lipids. as cofactor.

The protein resides in the plastid. Its subcellular location is the chloroplast thylakoid membrane. One of the components of the core complex of photosystem II (PSII). It binds chlorophyll and helps catalyze the primary light-induced photochemical processes of PSII. PSII is a light-driven water:plastoquinone oxidoreductase, using light energy to abstract electrons from H(2)O, generating O(2) and a proton gradient subsequently used for ATP formation. This chain is Photosystem II CP43 reaction center protein, found in Gracilaria tenuistipitata var. liui (Red alga).